A 162-amino-acid chain; its full sequence is F protein (162 aa).

The segment at Met-1–Ser-23 is disordered. The span at Asn-13–Ser-23 shows a compositional bias: polar residues.

The protein localises to the host cytoplasm. The protein resides in the host perinuclear region. This is F protein from Hepatitis C virus genotype 1a (isolate 1) (HCV).